The sequence spans 456 residues: Enolase (456 aa).

Position 177 (Q177) interacts with (2R)-2-phosphoglycerate. Residue E219 is the Proton donor of the active site. The Mg(2+) site is built by D256, E310, and D337. Positions 362, 391, 392, and 413 each coordinate (2R)-2-phosphoglycerate. The Proton acceptor role is filled by K362.

It belongs to the enolase family. As to quaternary structure, homodimer. Mg(2+) is required as a cofactor.

Its subcellular location is the cytoplasm. It localises to the secreted. The protein resides in the cell surface. The enzyme catalyses (2R)-2-phosphoglycerate = phosphoenolpyruvate + H2O. The protein operates within carbohydrate degradation; glycolysis; pyruvate from D-glyceraldehyde 3-phosphate: step 4/5. Functionally, catalyzes the reversible conversion of 2-phosphoglycerate (2-PG) into phosphoenolpyruvate (PEP). It is essential for the degradation of carbohydrates via glycolysis. Its function is as follows. 'Moonlights' as a plasminogen receptor. Binds plasminogen, but no fibronectin binding was observed. Plasminogen binding increases bacterial adherence to host cells; plasmin activity leads to degradation of host extracellular matrix proteins, facilitating bacterial dissemination and disease spread. The chain is Enolase from Mycoplasma pneumoniae (strain ATCC 29342 / M129 / Subtype 1) (Mycoplasmoides pneumoniae).